We begin with the raw amino-acid sequence, 189 residues long: MTEYKLVVVGAGGVGKSALTIQLIQNHFVDEYDPTIEDSYRKQVVIDGETCLLDILDTAGQEEYSAMRDQYMRTGEGFLCVFAINNSKSFADINLYREQIKRVKDSDDVPMVLVGNKCDLPTRTVDTKQAHELAKSYGIPFIETSAKTRQGVEDAFYTLVREIRQYRMKKLNSNDDGTQGCMGLPCVVM.

Residues 10 to 18 (GAGGVGKSA) and 29 to 30 (VD) each bind GTP. The Effector region motif lies at 32-40 (YDPTIEDSY). 57–61 (DTAGQ) serves as a coordination point for GTP. Ser-89 bears the Phosphoserine mark. Position 116–119 (116–119 (NKCD)) interacts with GTP. Residues 166–185 (YRMKKLNSNDDGTQGCMGLP) form a hypervariable region region. A Glycyl lysine isopeptide (Lys-Gly) (interchain with G-Cter in ubiquitin) cross-link involves residue Lys-170. The S-palmitoyl cysteine moiety is linked to residue Cys-181. Residue Cys-186 is the site of S-farnesyl cysteine attachment. A propeptide spans 187-189 (VVM) (removed in mature form).

This sequence belongs to the small GTPase superfamily. Ras family. As to quaternary structure, interacts (active GTP-bound form preferentially) with RGS14. Interacts (active GTP-bound form) with RASSF7. Interacts (active GTP-bound form) with both SHOC2 and PP1c (all isoforms) to form a tertiary complex; SHOC2 and PP1c preferably bind M-Ras/MRAS, but they also bind K-Ras/KRAS, N-Ras/NRAS and H-Ras/HRAS. Palmitoylated by the ZDHHC9-GOLGA7 complex. Depalmitoylated by ABHD17A, ABHD17B and ABHD17C. A continuous cycle of de- and re-palmitoylation regulates rapid exchange between plasma membrane and Golgi. Post-translationally, acetylation at Lys-104 prevents interaction with guanine nucleotide exchange factors (GEFs). In terms of processing, ubiquitinated by the BCR(LZTR1) E3 ubiquitin ligase complex at Lys-170 in a non-degradative manner, leading to inhibit Ras signaling by decreasing Ras association with membranes. Phosphorylation at Ser-89 enhances NRAS association with its downstream effectors.

Its subcellular location is the cell membrane. It localises to the golgi apparatus membrane. It catalyses the reaction GTP + H2O = GDP + phosphate + H(+). Alternates between an inactive form bound to GDP and an active form bound to GTP. Activated by a guanine nucleotide-exchange factor (GEF) and inactivated by a GTPase-activating protein (GAP). Its function is as follows. Ras proteins bind GDP/GTP and possess intrinsic GTPase activity. In Cavia porcellus (Guinea pig), this protein is GTPase NRas (NRAS).